Consider the following 202-residue polypeptide: Small ribosomal subunit protein uS4 (202 aa).

The segment covering 1-13 has biased composition (basic residues); sequence MSRYRGPRLRVTR. The tract at residues 1–42 is disordered; that stretch reads MSRYRGPRLRVTRRLGELPGLTRKASKKSNPPGQHGQARRKR. Residues 90–152 enclose the S4 RNA-binding domain; that stretch reads NRLDNVCFRL…KASKKLVEGN (63 aa).

This sequence belongs to the universal ribosomal protein uS4 family. In terms of assembly, part of the 30S ribosomal subunit. Contacts protein S5. The interaction surface between S4 and S5 is involved in control of translational fidelity.

Its function is as follows. One of the primary rRNA binding proteins, it binds directly to 16S rRNA where it nucleates assembly of the body of the 30S subunit. With S5 and S12 plays an important role in translational accuracy. The chain is Small ribosomal subunit protein uS4 from Prochlorococcus marinus subsp. pastoris (strain CCMP1986 / NIES-2087 / MED4).